Here is a 41-residue protein sequence, read N- to C-terminus: M-factor (41 aa).

Residues 1–25 are disordered; the sequence is MDSMANTVSSSVVNTGNKPSETLNK. Residues 1 to 29 constitute a propeptide that is removed on maturation; the sequence is MDSMANTVSSSVVNTGNKPSETLNKTVKN. Position 38 is a cysteine methyl ester (Cys38). Cys38 carries the S-farnesyl cysteine lipid modification. Residues 39-41 constitute a propeptide, removed in mature form; it reads VIA.

The protein localises to the secreted. M-factor is a mating pheromone produced by M-type mating cells. All three mfm genes contribute to the production of M-factor. The chain is M-factor (mfm3) from Schizosaccharomyces pombe (strain 972 / ATCC 24843) (Fission yeast).